The chain runs to 203 residues: CASP-like protein 5A2 (203 aa).

The Cytoplasmic portion of the chain corresponds to 1 to 63 (MRASRPVVHP…KDPPGAPGTP (63 aa)). The tract at residues 39–58 (AAHGGENAQPRGVRMKDPPG) is disordered. The chain crosses the membrane as a helical span at residues 64-84 (GGLGLRLVQAFFAAAALAVMA). The Extracellular portion of the chain corresponds to 85–94 (STDDFPSVSA). The helical transmembrane segment at 95–115 (FCYLVAAAILQCLWSLSLAVV) threads the bilayer. Residues 116–139 (DIYALLVKRSLRNPQAVCIFTIGD) lie on the Cytoplasmic side of the membrane. The helical transmembrane segment at 140-160 (GITGTLTLGAACASAGITVLI) threads the bilayer. Residues 161-177 (GNDLNICANNHCASFET) are Extracellular-facing. Residues 178-198 (ATAMAFISWFALAPSCVLNFW) traverse the membrane as a helical segment. The Cytoplasmic segment spans residues 199-203 (SMASR).

It belongs to the Casparian strip membrane proteins (CASP) family. As to quaternary structure, homodimer and heterodimers.

It localises to the cell membrane. The sequence is that of CASP-like protein 5A2 from Oryza sativa subsp. indica (Rice).